The sequence spans 1858 residues: Protein ROS1C (1858 aa).

Residues 347 to 356 show a composition bias toward basic and acidic residues; that stretch reads TEALKGEDAP. Disordered stretches follow at residues 347 to 416 and 1288 to 1309; these read TEAL…AEPF and PDTA…KNSE. Composition is skewed to basic residues over residues 360–370 and 394–404; these read LKTRRRKHRPK and KPKRKYVRKNR. 4 residues coordinate [4Fe-4S] cluster: Cys1492, Cys1499, Cys1502, and Cys1508.

It belongs to the DNA glycosylase family. DEMETER subfamily. [4Fe-4S] cluster is required as a cofactor. As to expression, expressed in pistils and immature seeds. Expressed a low levels in roots, leaves and anthers.

It is found in the nucleus. In terms of biological role, bifunctional DNA glycosylase/lyase, which excises 5-methylcytosine (5-meC) and 5-hydroxymethylcytosine (5-hmeC), leaving an apyrimidinic (AP) site that is subsequently incised by the lyase activity. Is responsible for the demethylation of methylated cytosine residues of Tos17 retrotransposon DNA. Demethylation of Tos17 cytosine residues promotes its transposition. May be involved in seed development. This Oryza sativa subsp. japonica (Rice) protein is Protein ROS1C.